We begin with the raw amino-acid sequence, 390 residues long: Chorismate synthase (390 aa).

NADP(+)-binding residues include arginine 48 and arginine 54. FMN contacts are provided by residues 125-127 (RSS), 238-239 (NA), glycine 278, 293-297 (KPTSS), and arginine 319. The disordered stretch occupies residues 360–390 (KVPGNIINPTNPVTTQPDVRRAEDPEPDENS). A compositionally biased stretch (polar residues) spans 366 to 376 (INPTNPVTTQP).

Belongs to the chorismate synthase family. Homotetramer. FMNH2 is required as a cofactor.

It carries out the reaction 5-O-(1-carboxyvinyl)-3-phosphoshikimate = chorismate + phosphate. It functions in the pathway metabolic intermediate biosynthesis; chorismate biosynthesis; chorismate from D-erythrose 4-phosphate and phosphoenolpyruvate: step 7/7. Catalyzes the anti-1,4-elimination of the C-3 phosphate and the C-6 proR hydrogen from 5-enolpyruvylshikimate-3-phosphate (EPSP) to yield chorismate, which is the branch point compound that serves as the starting substrate for the three terminal pathways of aromatic amino acid biosynthesis. This reaction introduces a second double bond into the aromatic ring system. The sequence is that of Chorismate synthase from Nitrosomonas eutropha (strain DSM 101675 / C91 / Nm57).